A 192-amino-acid chain; its full sequence is Nucleoside triphosphate pyrophosphatase (192 aa).

The active-site Proton acceptor is aspartate 73.

Belongs to the Maf family. The cofactor is a divalent metal cation.

It is found in the cytoplasm. It carries out the reaction a ribonucleoside 5'-triphosphate + H2O = a ribonucleoside 5'-phosphate + diphosphate + H(+). It catalyses the reaction a 2'-deoxyribonucleoside 5'-triphosphate + H2O = a 2'-deoxyribonucleoside 5'-phosphate + diphosphate + H(+). Its function is as follows. Nucleoside triphosphate pyrophosphatase. May have a dual role in cell division arrest and in preventing the incorporation of modified nucleotides into cellular nucleic acids. In Ehrlichia canis (strain Jake), this protein is Nucleoside triphosphate pyrophosphatase.